The sequence spans 125 residues: Small ribosomal subunit protein uS11m (125 aa).

Belongs to the universal ribosomal protein uS11 family.

Its subcellular location is the mitochondrion. This chain is Small ribosomal subunit protein uS11m (RPS11), found in Marchantia polymorpha (Common liverwort).